A 143-amino-acid polypeptide reads, in one-letter code: Transcriptional regulator MraZ (143 aa).

SpoVT-AbrB domains lie at 5–47 and 76–119; these read EYHH…SMEE and AMES…AKER.

The protein belongs to the MraZ family. Forms oligomers.

Its subcellular location is the cytoplasm. The protein localises to the nucleoid. In Lactobacillus helveticus (strain DPC 4571), this protein is Transcriptional regulator MraZ.